A 417-amino-acid polypeptide reads, in one-letter code: DNA-directed RNA polymerase subunit beta (417 aa).

It belongs to the RNA polymerase beta chain family. In plastids the minimal PEP RNA polymerase catalytic core is composed of four subunits: alpha, beta, beta', and beta''. When a (nuclear-encoded) sigma factor is associated with the core the holoenzyme is formed, which can initiate transcription.

The protein localises to the plastid. It is found in the chloroplast. The catalysed reaction is RNA(n) + a ribonucleoside 5'-triphosphate = RNA(n+1) + diphosphate. DNA-dependent RNA polymerase catalyzes the transcription of DNA into RNA using the four ribonucleoside triphosphates as substrates. The sequence is that of DNA-directed RNA polymerase subunit beta (rpoB) from Saponaria officinalis (Common soapwort).